The chain runs to 159 residues: Probable minor fimbrial protein (159 aa).

Residues M1–G6 constitute a propeptide, leader sequence. At F7 the chain carries N-methylphenylalanine. Residues F7–L27 traverse the membrane as a helical segment. 2 cysteine pairs are disulfide-bonded: C56/C71 and C140/C153.

It belongs to the N-Me-Phe pilin family. As to quaternary structure, the pili are polar flexible filaments of about 5.4 nanometers diameter and 2.5 micrometers average length; they consist of only a single polypeptide chain arranged in a helical configuration of five subunits per turn in the assembled pilus.

It is found in the fimbrium. The protein resides in the membrane. This is Probable minor fimbrial protein (fimZ) from Dichelobacter nodosus (Bacteroides nodosus).